The sequence spans 732 residues: Phosphoribosylformylglycinamidine synthase subunit PurL (732 aa).

Histidine 32 is a catalytic residue. Tyrosine 35 contacts ATP. Glutamate 81 contributes to the Mg(2+) binding site. Residues 82 to 85 (SHNH) and arginine 104 contribute to the substrate site. Histidine 83 acts as the Proton acceptor in catalysis. Aspartate 105 contributes to the Mg(2+) binding site. Residue glutamine 230 participates in substrate binding. Aspartate 258 is a binding site for Mg(2+). 302-304 (ESQ) lines the substrate pocket. 2 residues coordinate ATP: aspartate 485 and glycine 522. Asparagine 523 lines the Mg(2+) pocket. A substrate-binding site is contributed by serine 525.

It belongs to the FGAMS family. As to quaternary structure, monomer. Part of the FGAM synthase complex composed of 1 PurL, 1 PurQ and 2 PurS subunits.

It is found in the cytoplasm. It catalyses the reaction N(2)-formyl-N(1)-(5-phospho-beta-D-ribosyl)glycinamide + L-glutamine + ATP + H2O = 2-formamido-N(1)-(5-O-phospho-beta-D-ribosyl)acetamidine + L-glutamate + ADP + phosphate + H(+). It participates in purine metabolism; IMP biosynthesis via de novo pathway; 5-amino-1-(5-phospho-D-ribosyl)imidazole from N(2)-formyl-N(1)-(5-phospho-D-ribosyl)glycinamide: step 1/2. In terms of biological role, part of the phosphoribosylformylglycinamidine synthase complex involved in the purines biosynthetic pathway. Catalyzes the ATP-dependent conversion of formylglycinamide ribonucleotide (FGAR) and glutamine to yield formylglycinamidine ribonucleotide (FGAM) and glutamate. The FGAM synthase complex is composed of three subunits. PurQ produces an ammonia molecule by converting glutamine to glutamate. PurL transfers the ammonia molecule to FGAR to form FGAM in an ATP-dependent manner. PurS interacts with PurQ and PurL and is thought to assist in the transfer of the ammonia molecule from PurQ to PurL. The chain is Phosphoribosylformylglycinamidine synthase subunit PurL from Methanococcus aeolicus (strain ATCC BAA-1280 / DSM 17508 / OCM 812 / Nankai-3).